Here is a 169-residue protein sequence, read N- to C-terminus: Methane monooxygenase component A gamma chain (169 aa).

As to quaternary structure, m.trichosporium has two forms of methane monooxygenase, a soluble and a membrane-bound type. The soluble type consists of four components (A to D): protein A, comprising three chains, in an alpha-2, beta-2, gamma-2 configuration, is a nonheme iron protein containing an unusual mu-hydroxo bridge structure at its active site and interacts with both oxygen and methane.

The enzyme catalyses methane + NADH + O2 + H(+) = methanol + NAD(+) + H2O. The catalysed reaction is methane + NADPH + O2 + H(+) = methanol + NADP(+) + H2O. Functionally, responsible for the initial oxygenation of methane to methanol in methanotrophs. It also catalyzes the monohydroxylation of a variety of unactivated alkenes, alicyclic, aromatic and heterocyclic compounds. In Methylosinus trichosporium, this protein is Methane monooxygenase component A gamma chain (mmoZ).